Here is a 450-residue protein sequence, read N- to C-terminus: UDP-N-acetylmuramoylalanine--D-glutamate ligase (450 aa).

Residue 119–125 participates in ATP binding; that stretch reads GSNGKTT.

Belongs to the MurCDEF family.

It is found in the cytoplasm. It catalyses the reaction UDP-N-acetyl-alpha-D-muramoyl-L-alanine + D-glutamate + ATP = UDP-N-acetyl-alpha-D-muramoyl-L-alanyl-D-glutamate + ADP + phosphate + H(+). The protein operates within cell wall biogenesis; peptidoglycan biosynthesis. Functionally, cell wall formation. Catalyzes the addition of glutamate to the nucleotide precursor UDP-N-acetylmuramoyl-L-alanine (UMA). This Streptococcus pneumoniae (strain ATCC BAA-255 / R6) protein is UDP-N-acetylmuramoylalanine--D-glutamate ligase.